We begin with the raw amino-acid sequence, 586 residues long: Glutamate--tRNA ligase (586 aa).

A disordered region spans residues 84-111 (LTDIESEDTTDTYDLPSLPGVSDDEPTQ). Residues 85 to 94 (TDIESEDTTD) are compositionally biased toward acidic residues. Positions 119–129 (PNPNGPWHIGH) match the 'HIGH' region motif.

The protein belongs to the class-I aminoacyl-tRNA synthetase family. Glutamate--tRNA ligase type 2 subfamily.

Its subcellular location is the cytoplasm. It catalyses the reaction tRNA(Glu) + L-glutamate + ATP = L-glutamyl-tRNA(Glu) + AMP + diphosphate. Catalyzes the attachment of glutamate to tRNA(Glu) in a two-step reaction: glutamate is first activated by ATP to form Glu-AMP and then transferred to the acceptor end of tRNA(Glu). The chain is Glutamate--tRNA ligase from Haloquadratum walsbyi (strain DSM 16790 / HBSQ001).